The primary structure comprises 358 residues: Endoplasmic reticulum junction formation protein lunapark-B (358 aa).

The Cytoplasmic portion of the chain corresponds to 1–45 (MGAIISRWKTKLTTVEQLENIDKEIKQLEEFRAKNQRLQKLWVGR). Residues 9 to 41 (KTKLTTVEQLENIDKEIKQLEEFRAKNQRLQKL) adopt a coiled-coil conformation. A helical transmembrane segment spans residues 46–66 (LLLYSSALYLLISLFVYLLYL). Residues 67–69 (PEQ) are Lumenal-facing. A helical membrane pass occupies residues 70–90 (WLLRLAMALPFFIYPVLVWFI). Over 91-358 (RRFLIFLFSK…SRGMDKHGRA (268 aa)) the chain is Cytoplasmic. Residues 99–128 (SKRSERNNDKLEDLKATKKKILEEVMETET) are a coiled coil. A C4-type; plays a role in ER morphology zinc finger spans residues 275–300 (CQQCFSHNGMALKEEFEYLAFRCAYC). The interval 320 to 358 (NFEKRLRAESSTPGPAPHSATDTEESAPPSRGMDKHGRA) is disordered.

Belongs to the lunapark family. As to quaternary structure, homodimer; homodimerization requires the C4-type zinc finger motif and decreases during mitosis in a phosphorylation-dependent manner. Post-translationally, phosphorylated. Phosphorylation occurs during interphase. Phosphorylation also occurs during mitosis; these phosphorylations reduce both its homodimerization and the ER three-way tubular junction formation.

Its subcellular location is the endoplasmic reticulum membrane. Functionally, endoplasmic reticulum (ER)-shaping membrane protein that plays a role in determining ER morphology. Involved in the stabilization of nascent three-way ER tubular junctions within the ER network. May also play a role as a curvature-stabilizing protein within three-way ER tubular junction network. In Takifugu rubripes (Japanese pufferfish), this protein is Endoplasmic reticulum junction formation protein lunapark-B (lnpkb).